A 666-amino-acid polypeptide reads, in one-letter code: NADH-ubiquinone oxidoreductase chain 5 (666 aa).

17 helical membrane passes run 3–23 (LLIL…GRWL), 31–51 (FSTL…FEIG), 59–78 (IFLV…GFLF), 82–101 (TVTM…IYSI), 119–139 (IFTF…MFLG), 168–190 (LIVN…WVFN), 211–231 (FLGF…IGAI), 251–271 (TPVS…FLMI), 283–303 (ILFI…VTGV), 311–333 (VIAY…SCYD), 337–357 (FHLA…GSVI), 375–395 (FMPL…GFPF), 421–441 (YISF…FYSF), 467–487 (LLMI…GYLI), 524–544 (WLPF…QIFL), 572–594 (VLYN…FKIL), and 629–649 (YLFF…YSYI).

It belongs to the complex I subunit 5 family.

It is found in the mitochondrion inner membrane. It catalyses the reaction a ubiquinone + NADH + 5 H(+)(in) = a ubiquinol + NAD(+) + 4 H(+)(out). In terms of biological role, core subunit of the mitochondrial membrane respiratory chain NADH dehydrogenase (Complex I) that is believed to belong to the minimal assembly required for catalysis. Complex I functions in the transfer of electrons from NADH to the respiratory chain. The immediate electron acceptor for the enzyme is believed to be ubiquinone. The chain is NADH-ubiquinone oxidoreductase chain 5 (ND5) from Chondrus crispus (Carrageen Irish moss).